A 209-amino-acid polypeptide reads, in one-letter code: MASMGLQVMGIALAVLGWLGAILSCALPMWRVTAFIGSNIVTSQTIWEGLWMNCVVQSTGQMQCKVYDSLLALPQDLQAARALIVICIILAVFGVLLSVVGGKCTNCVDDESSKAKIMIVAGVVFLLAGLLVMVPVSWTANNVIRDFYNPLVASGQKREMGASLYVGWAAAGLLILGGALLCFNCPPRNDKPYSAKYSAARSAPASNYV.

Over 1–9 (MASMGLQVM) the chain is Cytoplasmic. Residues 1–103 (MASMGLQVMG…GVLLSVVGGK (103 aa)) are interaction with EPHA2. The helical transmembrane segment at 10 to 30 (GIALAVLGWLGAILSCALPMW) threads the bilayer. The Extracellular portion of the chain corresponds to 31–81 (RVTAFIGSNIVTSQTIWEGLWMNCVVQSTGQMQCKVYDSLLALPQDLQAAR). Cysteine 54 and cysteine 64 are oxidised to a cystine. The helical transmembrane segment at 82-102 (ALIVICIILAVFGVLLSVVGG) threads the bilayer. The Cytoplasmic segment spans residues 103–117 (KCTNCVDDESSKAKI). The chain crosses the membrane as a helical span at residues 118–138 (MIVAGVVFLLAGLLVMVPVSW). At 139–160 (TANNVIRDFYNPLVASGQKREM) the chain is on the extracellular side. A helical transmembrane segment spans residues 161 to 181 (GASLYVGWAAAGLLILGGALL). The Cytoplasmic segment spans residues 182-209 (CFNCPPRNDKPYSAKYSAARSAPASNYV). Tyrosine 208 carries the phosphotyrosine; by EPHA2 modification. The interactions with TJP1, TJP2 and TJP3 stretch occupies residues 208–209 (YV).

This sequence belongs to the claudin family. Interacts with EPHA2; phosphorylates CLDN4 and may regulate tight junctions. Directly interacts with TJP1/ZO-1, TJP2/ZO-2 and TJP3/ZO-3. Interacts with CLDN1. Interacts with CLDN8. In terms of processing, phosphorylated. Phosphorylation by EPHA2 is stimulated by EFNA1 and alters interaction with TJP1.

The protein localises to the cell junction. Its subcellular location is the tight junction. The protein resides in the cell membrane. Functionally, channel-forming tight junction protein that mediates paracellular chloride transport in the kidney. Plays a critical role in the paracellular reabsorption of filtered chloride in the kidney collecting ducts. Claudins play a major role in tight junction-specific obliteration of the intercellular space, through calcium-independent cell-adhesion activity. This is Claudin-4 (CLDN4) from Bos taurus (Bovine).